Consider the following 200-residue polypeptide: Ephrin-A2 (200 aa).

A signal peptide spans 1 to 22 (MPRWEAAALLAAIVGVCVWSDD). The 134-residue stretch at 28-161 (SDRYAVYWNR…KLKVYVRPTN (134 aa)) folds into the Ephrin RBD domain. The N-linked (GlcNAc...) asparagine glycan is linked to Asn36. Disulfide bonds link Cys61-Cys101 and Cys89-Cys150. Asn161 and Asn175 each carry an N-linked (GlcNAc...) asparagine glycan. A lipid anchor (GPI-anchor amidated asparagine) is attached at Asn175. The propeptide at 176–200 (NSCCSLAVPRAVLVAAPVFWTLLGS) is removed in mature form.

Belongs to the ephrin family. In terms of assembly, binds to the receptor tyrosine kinases EPHA3, EPHA4 and EPHA5. Interacts with EPHA8; activates EPHA8. As to expression, expressed in a gradient across the tectum being more strongly expressed at the posterior pole.

It localises to the cell membrane. Cell surface GPI-bound ligand for Eph receptors, a family of receptor tyrosine kinases which are crucial for migration, repulsion and adhesion during neuronal, vascular and epithelial development. Binds promiscuously Eph receptors residing on adjacent cells, leading to contact-dependent bidirectional signaling into neighboring cells. The signaling pathway downstream of the receptor is referred to as forward signaling while the signaling pathway downstream of the ephrin ligand is referred to as reverse signaling. With the EPHA2 receptor may play a role in bone remodeling through regulation of osteoclastogenesis and osteoblastogenesis. The polypeptide is Ephrin-A2 (EFNA2) (Gallus gallus (Chicken)).